Consider the following 34-residue polypeptide: Brevinin-2Rf (34 aa).

An intrachain disulfide couples Cys-28 to Cys-34.

As to expression, expressed by the skin glands.

The protein resides in the secreted. Antimicrobial peptide. In Pelophylax ridibundus (Marsh frog), this protein is Brevinin-2Rf.